The chain runs to 711 residues: DNA ligase (711 aa).

Residues methionine 1 to proline 21 are disordered. Residues alanine 10–proline 21 show a composition bias toward low complexity. NAD(+)-binding positions include aspartate 52–aspartate 56, serine 101–leucine 102, and glutamate 146. Lysine 148 (N6-AMP-lysine intermediate) is an active-site residue. The NAD(+) site is built by arginine 169, glutamate 205, lysine 322, and lysine 346. Cysteine 440, cysteine 443, cysteine 458, and cysteine 464 together coordinate Zn(2+). The region spanning arginine 623–serine 711 is the BRCT domain.

The protein belongs to the NAD-dependent DNA ligase family. LigA subfamily. It depends on Mg(2+) as a cofactor. The cofactor is Mn(2+).

It catalyses the reaction NAD(+) + (deoxyribonucleotide)n-3'-hydroxyl + 5'-phospho-(deoxyribonucleotide)m = (deoxyribonucleotide)n+m + AMP + beta-nicotinamide D-nucleotide.. Functionally, DNA ligase that catalyzes the formation of phosphodiester linkages between 5'-phosphoryl and 3'-hydroxyl groups in double-stranded DNA using NAD as a coenzyme and as the energy source for the reaction. It is essential for DNA replication and repair of damaged DNA. The protein is DNA ligase of Cupriavidus pinatubonensis (strain JMP 134 / LMG 1197) (Cupriavidus necator (strain JMP 134)).